Consider the following 519-residue polypeptide: Steroid 17-alpha-hydroxylase/17,20 lyase (519 aa).

Residue Cys455 coordinates heme.

It belongs to the cytochrome P450 family. Heme is required as a cofactor.

The protein localises to the membrane. The enzyme catalyses a C21-steroid + reduced [NADPH--hemoprotein reductase] + O2 = a 17alpha-hydroxy-C21-steroid + oxidized [NADPH--hemoprotein reductase] + H2O + H(+). It catalyses the reaction 17alpha-hydroxyprogesterone + reduced [NADPH--hemoprotein reductase] + O2 = androst-4-ene-3,17-dione + acetate + oxidized [NADPH--hemoprotein reductase] + H2O + 2 H(+). It carries out the reaction 17alpha-hydroxypregnenolone + reduced [NADPH--hemoprotein reductase] + O2 = 3beta-hydroxyandrost-5-en-17-one + acetate + oxidized [NADPH--hemoprotein reductase] + H2O + 2 H(+). It functions in the pathway lipid metabolism; steroid biosynthesis. In terms of biological role, conversion of pregnenolone and progesterone to their 17-alpha-hydroxylated products and subsequently to dehydroepiandrosterone (DHEA) and androstenedione. Catalyzes both the 17-alpha-hydroxylation and the 17,20-lyase reaction. This is Steroid 17-alpha-hydroxylase/17,20 lyase (CYP17A1) from Rana dybowskii (Dybovsky's frog).